We begin with the raw amino-acid sequence, 105 residues long: UPF0145 protein LPC_0273 (105 aa).

This sequence belongs to the UPF0145 family.

The protein is UPF0145 protein LPC_0273 of Legionella pneumophila (strain Corby).